The primary structure comprises 526 residues: Na(+)/H(+) antiporter NhaB (526 aa).

The next 10 helical transmembrane spans lie at F13–P33, L98–F118, L133–V155, L208–P228, F244–L264, A309–I329, E355–E375, L395–G415, V452–L472, and V481–F501.

This sequence belongs to the NhaB Na(+)/H(+) (TC 2.A.34) antiporter family.

It is found in the cell inner membrane. The enzyme catalyses 2 Na(+)(in) + 3 H(+)(out) = 2 Na(+)(out) + 3 H(+)(in). Na(+)/H(+) antiporter that extrudes sodium in exchange for external protons. In Serratia proteamaculans (strain 568), this protein is Na(+)/H(+) antiporter NhaB.